A 443-amino-acid polypeptide reads, in one-letter code: ATP-dependent protease ATPase subunit HslU (443 aa).

ATP-binding positions include isoleucine 19, 61–66 (GVGKTE), aspartate 256, glutamate 321, and arginine 393.

It belongs to the ClpX chaperone family. HslU subfamily. In terms of assembly, a double ring-shaped homohexamer of HslV is capped on each side by a ring-shaped HslU homohexamer. The assembly of the HslU/HslV complex is dependent on binding of ATP.

It localises to the cytoplasm. Functionally, ATPase subunit of a proteasome-like degradation complex; this subunit has chaperone activity. The binding of ATP and its subsequent hydrolysis by HslU are essential for unfolding of protein substrates subsequently hydrolyzed by HslV. HslU recognizes the N-terminal part of its protein substrates and unfolds these before they are guided to HslV for hydrolysis. The chain is ATP-dependent protease ATPase subunit HslU from Ralstonia nicotianae (strain ATCC BAA-1114 / GMI1000) (Ralstonia solanacearum).